Reading from the N-terminus, the 152-residue chain is Large ribosomal subunit protein bL9 (152 aa).

Belongs to the bacterial ribosomal protein bL9 family.

Binds to the 23S rRNA. The protein is Large ribosomal subunit protein bL9 of Synechococcus elongatus (strain ATCC 33912 / PCC 7942 / FACHB-805) (Anacystis nidulans R2).